Here is a 167-residue protein sequence, read N- to C-terminus: SsrA-binding protein (167 aa).

Residues 139-158 show a composition bias toward basic and acidic residues; that stretch reads QNHDKRDAAKDRDWQRDKQR. A disordered region spans residues 139–167; the sequence is QNHDKRDAAKDRDWQRDKQRVMRRHNRDA.

It belongs to the SmpB family.

The protein resides in the cytoplasm. Its function is as follows. Required for rescue of stalled ribosomes mediated by trans-translation. Binds to transfer-messenger RNA (tmRNA), required for stable association of tmRNA with ribosomes. tmRNA and SmpB together mimic tRNA shape, replacing the anticodon stem-loop with SmpB. tmRNA is encoded by the ssrA gene; the 2 termini fold to resemble tRNA(Ala) and it encodes a 'tag peptide', a short internal open reading frame. During trans-translation Ala-aminoacylated tmRNA acts like a tRNA, entering the A-site of stalled ribosomes, displacing the stalled mRNA. The ribosome then switches to translate the ORF on the tmRNA; the nascent peptide is terminated with the 'tag peptide' encoded by the tmRNA and targeted for degradation. The ribosome is freed to recommence translation, which seems to be the essential function of trans-translation. The chain is SsrA-binding protein from Xanthomonas euvesicatoria pv. vesicatoria (strain 85-10) (Xanthomonas campestris pv. vesicatoria).